We begin with the raw amino-acid sequence, 202 residues long: Mitochondrial import receptor subunit TOM20-3 (202 aa).

Methionine 1 carries the N-acetylmethionine modification. Topologically, residues 1–174 are cytoplasmic; the sequence is MDTETEFDRI…NKKSSDAKYD (174 aa). TPR repeat units follow at residues 38–74 and 86–119; these read GGVLLELSQFHSISDAKQMIQEAITKFEEALLIDPKK and TSFAFLTPDETEAKHNFDLATQFFQQAVDEQPDN. The disordered stretch occupies residues 146 to 166; the sequence is SQPMGRVEAPAPPSSKAVKNK. Residues 175-192 traverse the membrane as a helical segment; that stretch reads AMGWVILAIGVVAWISFA. Residues 193-202 lie on the Mitochondrial intermembrane side of the membrane; the sequence is KANVPVSPPR.

It belongs to the Tom20 family. Forms part of the preprotein translocase complex of the outer mitochondrial membrane (TOM complex) which consists of at least 6 different proteins (TOM5, TOM6, TOM7, TOM20, TOM22/TOM9 and TOM40). Component of a mitochondrial large protein complex that contains, at least, MIC60, DGS1, TOM40, TOM20 proteins, and petC/RISP. Post-translationally, the N-terminus is blocked. In terms of tissue distribution, expressed in roots, flowers, young cotyledons and leaves.

It is found in the mitochondrion outer membrane. In terms of biological role, central component of the receptor complex responsible for the recognition and translocation of cytosolically synthesized mitochondrial preproteins. Together with TOM22 functions as the transit peptide receptor at the surface of the mitochondrion outer membrane and facilitates the movement of preproteins into the translocation pore. The polypeptide is Mitochondrial import receptor subunit TOM20-3 (Arabidopsis thaliana (Mouse-ear cress)).